Here is a 96-residue protein sequence, read N- to C-terminus: Integration host factor subunit beta (96 aa).

It belongs to the bacterial histone-like protein family. In terms of assembly, heterodimer of an alpha and a beta chain.

This protein is one of the two subunits of integration host factor, a specific DNA-binding protein that functions in genetic recombination as well as in transcriptional and translational control. In Dichelobacter nodosus (strain VCS1703A), this protein is Integration host factor subunit beta.